The chain runs to 306 residues: Hydroxypyruvate reductase (306 aa).

NAD(+) is bound by residues 152-153 (NI), aspartate 172, 228-230 (TAR), and aspartate 254. The active site involves arginine 230. The active site involves glutamate 259. Catalysis depends on histidine 280, which acts as the Proton donor. NAD(+) is bound at residue 280–283 (HIGA).

This sequence belongs to the D-isomer specific 2-hydroxyacid dehydrogenase family.

It catalyses the reaction (R)-glycerate + NAD(+) = 3-hydroxypyruvate + NADH + H(+). The enzyme catalyses (R)-glycerate + NADP(+) = 3-hydroxypyruvate + NADPH + H(+). Functionally, involved in the degradation of L-serine via 3-hydroxypyruvate. Catalyzes the non-reversible reduction of 3-hydroxypyruvate to yield D-glycerate. In Thermotoga maritima (strain ATCC 43589 / DSM 3109 / JCM 10099 / NBRC 100826 / MSB8), this protein is Hydroxypyruvate reductase.